A 258-amino-acid chain; its full sequence is MFKVRVIPCLDVKDGRVVKGVNFVDLRDAGDPVEAAIAYDAAGADELTFLDITATHENRGIMLDVVRRTAEACFMPVTVGGGVRTIEDIRTLLRSGADKVSINSAAVSRREFVKEASEKFGDQCIVVAIDAKRVSRTGGTDRWEIFTHGGRRSTGIDAIEYAQEVASLGAGEILLTSMDRDGTRQGFDLPLTRRVADSVPVPVIASGGVGNLDHLVDGIREGHATAVLAASIFHFGEFTIRQAKEHMVRAGLAMRLDP.

Residues aspartate 11 and aspartate 130 contribute to the active site.

The protein belongs to the HisA/HisF family. As to quaternary structure, heterodimer of HisH and HisF.

The protein resides in the cytoplasm. It carries out the reaction 5-[(5-phospho-1-deoxy-D-ribulos-1-ylimino)methylamino]-1-(5-phospho-beta-D-ribosyl)imidazole-4-carboxamide + L-glutamine = D-erythro-1-(imidazol-4-yl)glycerol 3-phosphate + 5-amino-1-(5-phospho-beta-D-ribosyl)imidazole-4-carboxamide + L-glutamate + H(+). The protein operates within amino-acid biosynthesis; L-histidine biosynthesis; L-histidine from 5-phospho-alpha-D-ribose 1-diphosphate: step 5/9. In terms of biological role, IGPS catalyzes the conversion of PRFAR and glutamine to IGP, AICAR and glutamate. The HisF subunit catalyzes the cyclization activity that produces IGP and AICAR from PRFAR using the ammonia provided by the HisH subunit. This chain is Imidazole glycerol phosphate synthase subunit HisF, found in Nitrobacter winogradskyi (strain ATCC 25391 / DSM 10237 / CIP 104748 / NCIMB 11846 / Nb-255).